The following is a 411-amino-acid chain: Putative odorant receptor 59c (411 aa).

Residues 1–46 (MTKFFFKRLQTAPLDQEVSSLDASDYYYRIAFFLGWTPPKGALLRW) are Cytoplasmic-facing. The chain crosses the membrane as a helical span at residues 47–67 (IYSLWTLTTMWLGIVYLPLGL). Over 68–86 (SLTYVKHFDRFTPTEFLTS) the chain is Extracellular. Residues 87-107 (LQVDINCIGNVIKSCVTYSQM) form a helical membrane-spanning segment. At 108–139 (WRFRRMNELISSLDKRCVTTTQRRIFHKMVAR) the chain is on the cytoplasmic side. Residues 140–160 (VNLIVILFLSTYLGFCFLTLF) traverse the membrane as a helical segment. Residues 161 to 185 (TSVFAGKAPWQLYNPLVDWRKGHWQ) lie on the Extracellular side of the membrane. The helical transmembrane segment at 186–206 (LWIASILEYCVVSIGTMQELM) threads the bilayer. Over 207 to 271 (SDTYAIVFIS…QIIRPILSIT (65 aa)) the chain is Cytoplasmic. Residues 272–292 (IFAQFMLVGIDLGLAAISILF) form a helical membrane-spanning segment. Residues 293–296 (FPNT) are Extracellular-facing. Residues 297 to 317 (IWTIMANVSFIVAICTESFPC) traverse the membrane as a helical segment. Residues 318-369 (CMLCEHLIEDSVHVSNALFHSNWITADRSYKSAVLYFLHRAQQPIQFTAGSI) lie on the Cytoplasmic side of the membrane. A helical membrane pass occupies residues 370 to 390 (FPISVQSNIAVAKFAFTIITI). At 391–411 (VNQMNLGEKFFSDRSNGDINP) the chain is on the extracellular side.

It belongs to the insect chemoreceptor superfamily. Heteromeric odorant receptor channel (TC 1.A.69) family. Or2a subfamily. Interacts with Orco. Complexes exist early in the endomembrane system in olfactory sensory neurons (OSNs), coupling these complexes to the conserved ciliary trafficking pathway. Expressed in olfactory sensory neurons in the maxillary palp.

It localises to the cell membrane. Its function is as follows. Odorant receptor which mediates acceptance or avoidance behavior, depending on its substrates. The odorant receptor repertoire encodes a large collection of odor stimuli that vary widely in identity, intensity, and duration. May form a complex with Orco to form odorant-sensing units, providing sensitive and prolonged odorant signaling and calcium permeability. This chain is Putative odorant receptor 59c (Or59c), found in Drosophila melanogaster (Fruit fly).